Consider the following 410-residue polypeptide: Phosphopentomutase (410 aa).

Positions 10, 309, 314, 350, 351, and 362 each coordinate Mn(2+).

The protein belongs to the phosphopentomutase family. The cofactor is Mn(2+).

It is found in the cytoplasm. The catalysed reaction is 2-deoxy-alpha-D-ribose 1-phosphate = 2-deoxy-D-ribose 5-phosphate. It carries out the reaction alpha-D-ribose 1-phosphate = D-ribose 5-phosphate. The protein operates within carbohydrate degradation; 2-deoxy-D-ribose 1-phosphate degradation; D-glyceraldehyde 3-phosphate and acetaldehyde from 2-deoxy-alpha-D-ribose 1-phosphate: step 1/2. In terms of biological role, isomerase that catalyzes the conversion of deoxy-ribose 1-phosphate (dRib-1-P) and ribose 1-phosphate (Rib-1-P) to deoxy-ribose 5-phosphate (dRib-5-P) and ribose 5-phosphate (Rib-5-P), respectively. The sequence is that of Phosphopentomutase from Aliivibrio fischeri (strain ATCC 700601 / ES114) (Vibrio fischeri).